The primary structure comprises 411 residues: Fructose-1,6-bisphosphatase, chloroplastic (411 aa).

The N-terminal 53 residues, Met-1–Met-53, are a transit peptide targeting the chloroplast. Glu-133, Glu-162, Asp-183, Leu-185, and Asp-186 together coordinate Mg(2+). Asp-186–Ser-189 contacts substrate. An intrachain disulfide couples Cys-227 to Cys-232. Asn-291, Tyr-323, Tyr-341, Tyr-343, and Lys-353 together coordinate substrate. Glu-359 lines the Mg(2+) pocket.

The protein belongs to the FBPase class 1 family. As to quaternary structure, homotetramer. Mg(2+) is required as a cofactor.

Its subcellular location is the plastid. The protein resides in the chloroplast stroma. The catalysed reaction is beta-D-fructose 1,6-bisphosphate + H2O = beta-D-fructose 6-phosphate + phosphate. The protein operates within carbohydrate biosynthesis; Calvin cycle. In Brassica napus (Rape), this protein is Fructose-1,6-bisphosphatase, chloroplastic (FBP).